The chain runs to 429 residues: Histidine--tRNA ligase (429 aa).

This sequence belongs to the class-II aminoacyl-tRNA synthetase family. Homodimer.

It is found in the cytoplasm. It carries out the reaction tRNA(His) + L-histidine + ATP = L-histidyl-tRNA(His) + AMP + diphosphate + H(+). The chain is Histidine--tRNA ligase from Dechloromonas aromatica (strain RCB).